A 956-amino-acid polypeptide reads, in one-letter code: MAM domain-containing glycosylphosphatidylinositol anchor protein 1 (956 aa).

An N-terminal signal peptide occupies residues 1–18 (MEVTCLLLLALIPFHCRG). 2 consecutive Ig-like domains span residues 24–123 (PAQA…KSIR) and 132–230 (PVLT…KAIT). N42 carries N-linked (GlcNAc...) asparagine glycosylation. 2 disulfide bridges follow: C60/C108 and C157/C214. N-linked (GlcNAc...) asparagine glycans are attached at residues N235, N247, N257, and N307. 4 Ig-like domains span residues 240–323 (PALK…KTVN), 338–432 (PDMI…IEVN), 440–532 (PTIS…AQVQ), and 539–650 (PEVE…PTRS). 2 disulfide bridges follow: C262-C308 and C357-C415. N432 is a glycosylation site (N-linked (GlcNAc...) asparagine). Disulfide bonds link C463–C514 and C560–C616. The region spanning 627-744 (CLFQVSAKAY…SRIIHYTEPI (118 aa)) is the Fibronectin type-III domain. The 168-residue stretch at 752–919 (NTCHFEDEKI…VTLKKGECPR (168 aa)) folds into the MAM domain. Polar residues predominate over residues 780–789 (LTQNPKRSPN). The tract at residues 780–799 (LTQNPKRSPNTGPPTDISGT) is disordered. Residue S933 is the site of GPI-anchor amidated serine attachment. Residues 934–956 (GAPRLSSLQLWGSMAIFLLALQR) constitute a propeptide, removed in mature form.

In terms of assembly, interacts heterophilically through its MAM domain with proteins in axon-rich regions and through its Ig-like domains with proteins in differentiating muscle. Interacts (through the Ig-like domains) with NLGN2. In terms of tissue distribution, expressed by neurons in layers 2 and 3 of the cortex during their migration and settling in the cortical plate. Also found in layers 4 and 6a. From 9.5 dpc-13.5 dpc, detected in the marginal zone of the developing cortex. At 16.5 dpc, modest expression is found in the intermediate zone. At postnatal day 1, evident in the superficial cortical plate. By postnatal day 7, expression is limited to layers 2 and 3 throughout most of the cortex.

Its subcellular location is the cell membrane. Its function is as follows. Required for radial migration of cortical neurons in the superficial layer of the neocortex. Plays a role in the formation or maintenance of inhibitory synapses. May function by inhibiting the activity of NLGN2. The polypeptide is MAM domain-containing glycosylphosphatidylinositol anchor protein 1 (Mus musculus (Mouse)).